A 543-amino-acid chain; its full sequence is Probable protein kinase UbiB (543 aa).

The region spanning 123–501 (DFDQQALASA…RVRQGQSRYL (379 aa)) is the Protein kinase domain. Residues 129–137 (LASASIAQV) and Lys-152 contribute to the ATP site. Asp-287 functions as the Proton acceptor in the catalytic mechanism. Transmembrane regions (helical) follow at residues 498–518 (SRYL…LLSG) and 519–539 (DVEV…VIGW).

It belongs to the ABC1 family. UbiB subfamily.

The protein resides in the cell inner membrane. It participates in cofactor biosynthesis; ubiquinone biosynthesis [regulation]. In terms of biological role, is probably a protein kinase regulator of UbiI activity which is involved in aerobic coenzyme Q (ubiquinone) biosynthesis. The protein is Probable protein kinase UbiB of Serratia proteamaculans (strain 568).